A 475-amino-acid polypeptide reads, in one-letter code: Protein EARLY HEADING DATE 2 (475 aa).

Polar residues predominate over residues 1–16 (MLLSDLSSDQEATGSN). The tract at residues 1–26 (MLLSDLSSDQEATGSNSHGGGGGDRM) is disordered. 2 C2H2-type zinc fingers span residues 105–127 (FVCE…RRGH) and 155–185 (YVCP…SRKH). Short sequence motifs (nuclear localization signal) lie at residues 123–130 (HRRGHNLP) and 177–184 (IKKHFSRK). The C2H2-type 2; degenerate zinc-finger motif lies at 190–213 (WRCERCGKRYAVHSDWKAHVKNCG). Zn(2+) is bound by residues Cys-192, Cys-195, His-208, Cys-212, Cys-219, Cys-221, His-234, and Cys-238. The segment at 217–240 (YRCDCGILFSRKDSLLTHRAFCDA) adopts a CCHC-type 2; atypical zinc-finger fold. The tract at residues 227-239 (RKDSLLTHRAFCD) is SHR-binding.

As to expression, mostly expressed in developing leaves (more in sheaths than in blades, especially in the outer epidermal cell of immature leaves and in the region immediately beneath the meristem where internodes are visible) and panicles, and, at very low levels, around the shoot apex and in roots.

The protein resides in the nucleus. Functionally, transcription activator that acts as a flowering master switch in both long and short days, independently of the circadian clock. Promotes flowering upstream of HD1 by up-regulating FTL1, FTL4, FTL5, FTL6, EHD1, HD3A and RFT1. Seems to repress FTL11 expression. May recognize the consensus motif 5'-TTTGTCGTAAT-3' in target gene promoters. This chain is Protein EARLY HEADING DATE 2, found in Oryza sativa subsp. japonica (Rice).